A 205-amino-acid chain; its full sequence is MGTAGAMQLCWVILGFLLFRGHNSQPTMTQTSSSQGGLGGLSLTTEPVSSNPGYIPSSEANRPSHLSSTGTPGAGVPSSGRDGGTSRDTFQTVPPNSTTMSLSMREDATILPSPTSETVLTVAAFGVISFIVILVVVVIILVGVVSLRFKCRKSKESEDPQKPGSSGLSESCSTANGEKDSITLISMKNINMNNGKQSLSAEKVL.

A signal peptide spans 1–24; it reads MGTAGAMQLCWVILGFLLFRGHNS. Topologically, residues 25-124 are extracellular; it reads QPTMTQTSSS…TSETVLTVAA (100 aa). Polar residues-rich tracts occupy residues 49–71 and 86–101; these read SSNP…STGT and SRDT…TTMS. The interval 49–101 is disordered; it reads SSNPGYIPSSEANRPSHLSSTGTPGAGVPSSGRDGGTSRDTFQTVPPNSTTMS. The chain crosses the membrane as a helical span at residues 125–145; that stretch reads FGVISFIVILVVVVIILVGVV. Residues 146-205 lie on the Cytoplasmic side of the membrane; sequence SLRFKCRKSKESEDPQKPGSSGLSESCSTANGEKDSITLISMKNINMNNGKQSLSAEKVL. Positions 153-175 are disordered; sequence KSKESEDPQKPGSSGLSESCSTA. The segment covering 163 to 175 has biased composition (polar residues); the sequence is PGSSGLSESCSTA. Ser198 is modified (phosphoserine).

This sequence belongs to the ECSCR family. Interacts with FLNA. Interacts with the 20S proteasome subunit PSMA7. Post-translationally, may be heavily O-glycosylated. Highest expression in endothelial cells. Also detected in vascular smooth muscle, macrophages, lymphocytes, and mast cells.

Its subcellular location is the cell membrane. It is found in the cytoplasm. Functionally, regulates endothelial chemotaxis and tube formation. Has a role in angiogenesis and apoptosis via modulation of the actin cytoskeleton and facilitation of proteasomal degradation of the apoptosis inhibitors BIRC3/IAP1 and BIRC2/IAP2. The protein is Endothelial cell-specific chemotaxis regulator (ECSCR) of Homo sapiens (Human).